Reading from the N-terminus, the 359-residue chain is 1-deoxy-D-xylulose 5-phosphate reductoisomerase (359 aa).

Thr7, Gly8, Ser9, Ile10, Ala31, Asn33, and Asn111 together coordinate NADPH. Lys112 contributes to the 1-deoxy-D-xylulose 5-phosphate binding site. Residue Glu113 participates in NADPH binding. Mn(2+) is bound at residue Asp131. Ser132, Glu133, Ser155, and His178 together coordinate 1-deoxy-D-xylulose 5-phosphate. A Mn(2+)-binding site is contributed by Glu133. An NADPH-binding site is contributed by Gly184. 1-deoxy-D-xylulose 5-phosphate contacts are provided by Ser191, Asn196, Lys197, and Glu200. Mn(2+) is bound at residue Glu200.

This sequence belongs to the DXR family. Mg(2+) serves as cofactor. The cofactor is Mn(2+).

It catalyses the reaction 2-C-methyl-D-erythritol 4-phosphate + NADP(+) = 1-deoxy-D-xylulose 5-phosphate + NADPH + H(+). It functions in the pathway isoprenoid biosynthesis; isopentenyl diphosphate biosynthesis via DXP pathway; isopentenyl diphosphate from 1-deoxy-D-xylulose 5-phosphate: step 1/6. Functionally, catalyzes the NADPH-dependent rearrangement and reduction of 1-deoxy-D-xylulose-5-phosphate (DXP) to 2-C-methyl-D-erythritol 4-phosphate (MEP). The chain is 1-deoxy-D-xylulose 5-phosphate reductoisomerase from Campylobacter hominis (strain ATCC BAA-381 / DSM 21671 / CCUG 45161 / LMG 19568 / NCTC 13146 / CH001A).